The sequence spans 200 residues: Early E1A 21 kDa protein (200 aa).

The disordered stretch occupies residues 78–98 (QDSTTATSAEEPSASTDSISS). The LXCXE motif, interaction with host RB1 motif lies at 114-118 (LRCYE). The segment at 136 to 151 (CSTCGGHEVNGFCSLC) is a zinc-finger region. A Nuclear localization signal motif is present at residues 196–200 (SRHDE).

Interaction with host RB1 induces the aberrant dissociation of RB1-E2F1 complex thereby disrupting RB1's activity.

E1A protein has both transforming and trans-activating activities. Plays a role in viral genome replication by driving entry of quiescent cells into the cell cycle. Disrupts the function of host retinoblastoma protein RB1/pRb and isoform early E1A 26 kDa protein stabilizes TP53, which are key regulators of the cell cycle. Induces the disassembly of the E2F1 transcription factors from RB1 by direct competition for the same binding site on RB1, with subsequent transcriptional activation of E2F1-regulated S-phase genes. Inactivation of the ability of RB1 to arrest the cell cycle is critical for cellular transformation, uncontrolled cellular growth and proliferation induced by viral infection. Stimulation of progression from G1 to S phase allows the virus to efficiently use the cellular DNA replicating machinery to achieve viral genome replication. The polypeptide is Early E1A 21 kDa protein (Murine adenovirus A serotype 1 (MAdV-1)).